Consider the following 326-residue polypeptide: Probable iron chelatin transport system permease protein jhp_0822 (326 aa).

The next 10 helical transmembrane spans lie at 7-27 (IALA…ESLS), 64-84 (ILAL…QTIL), 91-111 (PFLL…IAVV), 113-133 (SNIA…VLAM), 142-162 (LSLV…AGAI), 164-184 (FFVI…SLSL), 187-207 (YKDC…LFLL), 241-261 (VASA…LVIP), 275-295 (LLLS…VVAK), and 301-321 (DLPV…WLLF).

It belongs to the binding-protein-dependent transport system permease family. FecCD subfamily.

Its subcellular location is the cell inner membrane. In terms of biological role, part of a binding-protein-dependent transport system for an iron chelatin; probably responsible for the translocation of the substrate across the membrane. The chain is Probable iron chelatin transport system permease protein jhp_0822 from Helicobacter pylori (strain J99 / ATCC 700824) (Campylobacter pylori J99).